The following is a 402-amino-acid chain: Serine/threonine-protein phosphatase 4 regulatory subunit 2 (402 aa).

A disordered region spans residues 258–402; the sequence is NEDQDDENTG…FSKRNKASES (145 aa). The segment covering 266 to 277 has biased composition (polar residues); it reads TGFSNQVINDNN. Residues 278–319 are compositionally biased toward acidic residues; the sequence is DSQEDDDEDSDYIEEDEGDEDEDDDDDEEEEEEEDGDEDEDE. Basic and acidic residues predominate over residues 320–337; the sequence is DKHFDIKVEEEAVKEDAN. The span at 345–358 shows a compositional bias: low complexity; sequence NVSNNSDDSSLQND.

It belongs to the PPP4R2 family. Regulatory subunit (R2) of the histone H2A phosphatase complex (HTP-C) consisting of PPH3, PSY2 and PSY4.

Its subcellular location is the nucleus. Its function is as follows. Regulatory subunit of the histone H2A phosphatase complex, which dephosphorylates H2AS128ph (gamma-H2A) that has been displaced from sites of DNA lesions in the double-stranded DNA break repair process. Dephosphorylation is necessary for efficient recovery from the DNA damage checkpoint. In Candida glabrata (strain ATCC 2001 / BCRC 20586 / JCM 3761 / NBRC 0622 / NRRL Y-65 / CBS 138) (Yeast), this protein is Serine/threonine-protein phosphatase 4 regulatory subunit 2 (PSY4).